A 449-amino-acid chain; its full sequence is Cortexillin-2 (449 aa).

The actin-binding stretch occupies residues 1-231 (MTDLHKEWEK…ILYTSLFFHA (231 aa)). 2 Calponin-homology (CH) domains span residues 10–119 (KVQE…RKYR) and 128–233 (KSSE…HAYR). Coiled-coil stretches lie at residues 232 to 364 (YRAK…AEGL) and 408 to 441 (QFEE…LKSA).

This sequence belongs to the cortexillin family. As to quaternary structure, homodimer; parallel.

It localises to the cytoplasm. Its subcellular location is the cytoskeleton. Its function is as follows. Actin-bundling protein. When linked to F-actin the actin filaments form preferentially anti-parallel bundles that associate into meshworks. Plays a major role in cytokinesis. In Heterostelium pallidum (strain ATCC 26659 / Pp 5 / PN500) (Cellular slime mold), this protein is Cortexillin-2 (ctxB).